Reading from the N-terminus, the 447-residue chain is MSTMTPAEIVSELDKHIIGQDKAKKAVAVALRNRWRRQQVAEPLRQEITPKNILMIGPTGVGKTEIARRLAKLADAPFIKIEATKFTEVGYVGRDVDSIVRDLIEISVKQTRETEMRKVRSKATDLAEDRILDVLLPQPRAVGFGASVEHANDDNNATRQTFRKRLREGQLDDKEIELDIEQPTVGMDIMAPPGMEEMTEQIRSMFSNLGSGKKQRRKVKIKEALKLLTDEEAAKMLNDEEVKTKAVQNVEQNGIVFLDEIDKITSRNHEGGGGEVSRQGVQRDLLPLVEGTTINTKYGMVKTDHILFIASGAFHLAKPSDLIPELQGRFPIRVELDSLSVKDFEAILVATDASLVKQYQALLATEDVALEFADDGIRRLAEIAYAVNEKTENIGARRLYTVIEKLLEEVSFAAGNHAGQSVTIDAAYVDRALGEVSKDEDLSRYVL.

Residues Ile-18, 60 to 65, Asp-259, Glu-325, and Arg-397 each bind ATP; that span reads GVGKTE.

This sequence belongs to the ClpX chaperone family. HslU subfamily. In terms of assembly, a double ring-shaped homohexamer of HslV is capped on each side by a ring-shaped HslU homohexamer. The assembly of the HslU/HslV complex is dependent on binding of ATP.

Its subcellular location is the cytoplasm. Functionally, ATPase subunit of a proteasome-like degradation complex; this subunit has chaperone activity. The binding of ATP and its subsequent hydrolysis by HslU are essential for unfolding of protein substrates subsequently hydrolyzed by HslV. HslU recognizes the N-terminal part of its protein substrates and unfolds these before they are guided to HslV for hydrolysis. This Burkholderia thailandensis (strain ATCC 700388 / DSM 13276 / CCUG 48851 / CIP 106301 / E264) protein is ATP-dependent protease ATPase subunit HslU.